We begin with the raw amino-acid sequence, 446 residues long: Ubiquitin carboxyl-terminal hydrolase MINDY-3 (446 aa).

The active-site Nucleophile is Cys-51. The segment covering 117 to 128 (DNSDITDSHPEP) has biased composition (basic and acidic residues). Residues 117-137 (DNSDITDSHPEPESSQPTDTP) form a disordered region. His-288 (proton acceptor) is an active-site residue.

Belongs to the MINDY deubiquitinase family. FAM188 subfamily.

The protein resides in the nucleus. The catalysed reaction is Thiol-dependent hydrolysis of ester, thioester, amide, peptide and isopeptide bonds formed by the C-terminal Gly of ubiquitin (a 76-residue protein attached to proteins as an intracellular targeting signal).. Functionally, hydrolase that can remove 'Lys-48'-linked conjugated ubiquitin from proteins. This Danio rerio (Zebrafish) protein is Ubiquitin carboxyl-terminal hydrolase MINDY-3 (mindy3).